The primary structure comprises 667 residues: Trifunctional UDP-glucose 4,6-dehydratase/UDP-4-keto-6-deoxy-D-glucose 3,5-epimerase/UDP-4-keto-L-rhamnose-reductase RHM2 (667 aa).

G15–A21 is an NAD(+) binding site. T134 contacts substrate. The active-site Proton donor is D135. Catalysis depends on proton acceptor residues E136 and Y161. G389 to G395 provides a ligand contact to NADP(+).

This sequence in the N-terminal section; belongs to the NAD(P)-dependent epimerase/dehydratase family. dTDP-glucose dehydratase subfamily. The protein in the C-terminal section; belongs to the dTDP-4-dehydrorhamnose reductase family. The cofactor is NAD(+). Requires NADP(+) as cofactor. Expressed in roots, stems, leaves, seedlings, inflorescence tips, and siliques.

It catalyses the reaction UDP-alpha-D-glucose = UDP-4-dehydro-6-deoxy-alpha-D-glucose + H2O. It participates in carbohydrate biosynthesis. Functionally, trifunctional enzyme involved in UDP-beta-L-rhamnose biosynthesis, a precursor of the primary cell wall components rhamnogalacturonan I (RG-I) and rhamnogalacturonan II (RG-II). Catalyzes the dehydration of UDP-glucose to form UDP-4-dehydro-6-deoxy-D-glucose followed by the epimerization of the C3' and C5' positions of UDP-4-dehydro-6-deoxy-D-glucose to form UDP-4-keto-beta-L-rhamnose and the reduction of UDP-4-keto-beta-L-rhamnose to yield UDP-beta-L-rhamnose. Required for the normal seed coat epidermal development. The chain is Trifunctional UDP-glucose 4,6-dehydratase/UDP-4-keto-6-deoxy-D-glucose 3,5-epimerase/UDP-4-keto-L-rhamnose-reductase RHM2 from Arabidopsis thaliana (Mouse-ear cress).